Reading from the N-terminus, the 264-residue chain is Small ribosomal subunit protein uS2 (264 aa).

Residues 225–264 are disordered; that stretch reads GKKAREERQLAAAKDAAGDAKPEAEEAPVAAEAEEAPAAE.

It belongs to the universal ribosomal protein uS2 family.

The chain is Small ribosomal subunit protein uS2 from Corynebacterium glutamicum (strain R).